We begin with the raw amino-acid sequence, 664 residues long: Intraflagellar transport protein 70B (664 aa).

7 TPR repeats span residues 11-44 (DGEF…SPRS), 45-78 (RAGL…HPEL), 153-186 (YDGQ…SGYQ), 188-220 (DISY…GIRQ), 385-418 (LTEQ…YDET), 423-456 (IPVL…CNDH), and 458-491 (VWKL…NYDN). Positions 507–534 (YIMTSQNEEAEELMRKIEKEEEQLSYDD) form a coiled coil. A TPR 8 repeat occupies 543 to 576 (CIVNLVIGTLYCAKGNYDFGISRVIKSLEPYHKK).

The protein belongs to the TTC30/dfy-1/fleer family. Interacts with the IFT B complex components IFT27, IFT46, IFT74, IFT52, IFT57, IFT80, IFT81 and IFT88. Interacts with KIF17.

The protein localises to the cell projection. The protein resides in the cilium. In terms of biological role, required for polyglutamylation of axonemal tubulin. Plays a role in anterograde intraflagellar transport (IFT), the process by which cilia precursors are transported from the base of the cilium to the site of their incorporation at the tip. The protein is Intraflagellar transport protein 70B (Ift70b) of Rattus norvegicus (Rat).